The sequence spans 136 residues: Large ribosomal subunit protein uL16 (136 aa).

Belongs to the universal ribosomal protein uL16 family. As to quaternary structure, part of the 50S ribosomal subunit.

In terms of biological role, binds 23S rRNA and is also seen to make contacts with the A and possibly P site tRNAs. This Alteromonas mediterranea (strain DSM 17117 / CIP 110805 / LMG 28347 / Deep ecotype) protein is Large ribosomal subunit protein uL16.